The chain runs to 292 residues: ATP synthase gamma chain (292 aa).

This sequence belongs to the ATPase gamma chain family. As to quaternary structure, F-type ATPases have 2 components, CF(1) - the catalytic core - and CF(0) - the membrane proton channel. CF(1) has five subunits: alpha(3), beta(3), gamma(1), delta(1), epsilon(1). CF(0) has three main subunits: a, b and c.

The protein localises to the cell inner membrane. Produces ATP from ADP in the presence of a proton gradient across the membrane. The gamma chain is believed to be important in regulating ATPase activity and the flow of protons through the CF(0) complex. The protein is ATP synthase gamma chain of Hyphomonas neptunium (strain ATCC 15444).